We begin with the raw amino-acid sequence, 340 residues long: Phospho-N-acetylmuramoyl-pentapeptide-transferase (340 aa).

Helical transmembrane passes span 3–23, 53–73, 79–99, 119–139, 144–164, 176–196, 200–220, 227–247, 250–270, and 315–335; these read MSLIAGVAAFVLTVLAMPHFI, GGTVFLVVAILISLIFNFHVF, AYGATAGILFVILIYGIIGFL, MALQIVAGLLFYFIHVLPSGT, IGGLTIQLGVFYVLFVLFWIV, IDGLASVSVVISLIAYGIIAF, ELAILTIIITMIGALLGFFVF, VFMGDVGSLSLGAMLAVISIA, VEWTLLLIGVVYVLETASVML, and VDAFLWTIGALASSITLWMVL.

It belongs to the glycosyltransferase 4 family. MraY subfamily. The cofactor is Mg(2+).

The protein localises to the cell membrane. The catalysed reaction is UDP-N-acetyl-alpha-D-muramoyl-L-alanyl-gamma-D-glutamyl-L-lysyl-D-alanyl-D-alanine + di-trans,octa-cis-undecaprenyl phosphate = Mur2Ac(oyl-L-Ala-gamma-D-Glu-L-Lys-D-Ala-D-Ala)-di-trans,octa-cis-undecaprenyl diphosphate + UMP. It functions in the pathway cell wall biogenesis; peptidoglycan biosynthesis. Catalyzes the initial step of the lipid cycle reactions in the biosynthesis of the cell wall peptidoglycan: transfers peptidoglycan precursor phospho-MurNAc-pentapeptide from UDP-MurNAc-pentapeptide onto the lipid carrier undecaprenyl phosphate, yielding undecaprenyl-pyrophosphoryl-MurNAc-pentapeptide, known as lipid I. The protein is Phospho-N-acetylmuramoyl-pentapeptide-transferase of Streptococcus thermophilus (strain CNRZ 1066).